Reading from the N-terminus, the 1361-residue chain is Cell migration-inducing and hyaluronan-binding protein (1361 aa).

The first 30 residues, 1–30 (MGAAGRQDFLFKAMLTISWLTLTCFPGATS), serve as a signal peptide directing secretion. The region spanning 44–166 (QPWNPGHDQD…KKLSWTFLNK (123 aa)) is the G8 domain. N-linked (GlcNAc...) asparagine glycosylation is found at Asn-119, Asn-165, Asn-312, Asn-370, and Asn-420. Residues 176 to 317 (GGYFFERSWG…GEYFNVSLSS (142 aa)) enclose the GG-type lectin 1 domain. Residues 295–591 (AAARVFKLFQ…IHHTFSRCVT (297 aa)) are necessary for its endoplasmic reticulum (ER) retention and interaction with HSPA5. PbH1 repeat units lie at residues 572–594 (DPPT…TVHG), 595–617 (SNGL…FTED), 719–741 (IPLG…IIDN), and 798–819 (GGDV…TLAS). N-linked (GlcNAc...) asparagine glycosylation is found at Asn-889 and Asn-921. The region spanning 1227–1361 (NDFAYIEVDG…PIPVVKKKKL (135 aa)) is the GG-type lectin 2 domain.

Belongs to the CEMIP family. In terms of assembly, interacts with EPHA2 and ITPR3. Interacts with HSPA5/BIP; the interaction induces calcium leakage from the endoplasmic reticulum and cell migration. Interacts with clathrin heavy chain/CLTC. N-glycosylated; glycosylation is not necessary for HA-binding. Expressed in dermal and in synovial fibroblasts. Strongly expressed in gastric cancers compared with the paired normal tissues. Strongly expressed in both ductal carcinoma and invasive breast cancer cells compared with benign epithelial cells (at protein level). Strongly expressed in brain, placenta, prostate, breast, lung and testis. Expressed in fibroblasts, epithelial cells and cancer cells. In ear, it is specifically expressed in inner ear. Expressed in cochlea and vestibule tissues. Strongly expressed in gastric cancers compared with the paired normal tissues. Strongly expressed in colon adenocarcinomas compared with normal colonic mucosas. Strongly expressed in breast cancer as compared to normal breast tissue.

The protein localises to the nucleus. Its subcellular location is the cytoplasm. It localises to the endoplasmic reticulum. It is found in the cell membrane. The protein resides in the membrane. The protein localises to the clathrin-coated pit. Its subcellular location is the secreted. It catalyses the reaction Random hydrolysis of (1-&gt;4)-linkages between N-acetyl-beta-D-glucosamine and D-glucuronate residues in hyaluronate.. Activity is up-regulated by histamine. Functionally, mediates depolymerization of hyaluronic acid (HA) via the cell membrane-associated clathrin-coated pit endocytic pathway. Binds to hyaluronic acid. Hydrolyzes high molecular weight hyaluronic acid to produce an intermediate-sized product, a process that may occur through rapid vesicle endocytosis and recycling without intracytoplasmic accumulation or digestion in lysosomes. Involved in hyaluronan catabolism in the dermis of the skin and arthritic synovium. Positively regulates epithelial-mesenchymal transition (EMT), and hence tumor cell growth, invasion and cancer dissemination. In collaboration with HSPA5/BIP, promotes cancer cell migration in a calcium and PKC-dependent manner. May be involved in hearing. This chain is Cell migration-inducing and hyaluronan-binding protein, found in Homo sapiens (Human).